The primary structure comprises 697 residues: Potassium-transporting ATPase ATP-binding subunit (697 aa).

The next 4 helical transmembrane spans lie at 55-75, 79-99, 245-265, and 271-291; these read PIMF…FLPS, SIPG…VLFA, LTLI…YLGF, and VLVA…LSAI. Aspartate 324 (4-aspartylphosphate intermediate) is an active-site residue. ATP contacts are provided by residues aspartate 361, glutamate 365, 393-400, and lysine 412; that span reads FKAETRMS. The Mg(2+) site is built by aspartate 535 and aspartate 539. 3 helical membrane passes run 605–625, 633–653, and 677–697; these read FAII…LNIM, AILS…PLAM, and GGVI…GLFI.

The protein belongs to the cation transport ATPase (P-type) (TC 3.A.3) family. Type IA subfamily. As to quaternary structure, the system is composed of three essential subunits: KdpA, KdpB and KdpC.

Its subcellular location is the cell membrane. It carries out the reaction K(+)(out) + ATP + H2O = K(+)(in) + ADP + phosphate + H(+). Its function is as follows. Part of the high-affinity ATP-driven potassium transport (or Kdp) system, which catalyzes the hydrolysis of ATP coupled with the electrogenic transport of potassium into the cytoplasm. This subunit is responsible for energy coupling to the transport system and for the release of the potassium ions to the cytoplasm. This chain is Potassium-transporting ATPase ATP-binding subunit, found in Bacillus cereus (strain G9842).